A 54-amino-acid polypeptide reads, in one-letter code: Ovomucoid (54 aa).

Residues 4–54 (VDCSDYPKPVCSLEYMPLCGSDNKTYGNKCNFCNAVADSNGTLTLSHFGKC) form the Kazal-like domain. 3 disulfides stabilise this stretch: cysteine 6–cysteine 36, cysteine 14–cysteine 33, and cysteine 22–cysteine 54. Asparagine 43 carries an N-linked (GlcNAc...) asparagine glycan.

Its subcellular location is the secreted. This Guira guira (Guira cuckoo) protein is Ovomucoid.